We begin with the raw amino-acid sequence, 357 residues long: UDP-N-acetylglucosamine--N-acetylmuramyl-(pentapeptide) pyrophosphoryl-undecaprenol N-acetylglucosamine transferase (357 aa).

UDP-N-acetyl-alpha-D-glucosamine-binding positions include Thr12–Gly14, Asn124, Arg162, Ser190, Ile243, Ala262–Glu267, and Gln288.

Belongs to the glycosyltransferase 28 family. MurG subfamily.

The protein resides in the cell inner membrane. The catalysed reaction is di-trans,octa-cis-undecaprenyl diphospho-N-acetyl-alpha-D-muramoyl-L-alanyl-D-glutamyl-meso-2,6-diaminopimeloyl-D-alanyl-D-alanine + UDP-N-acetyl-alpha-D-glucosamine = di-trans,octa-cis-undecaprenyl diphospho-[N-acetyl-alpha-D-glucosaminyl-(1-&gt;4)]-N-acetyl-alpha-D-muramoyl-L-alanyl-D-glutamyl-meso-2,6-diaminopimeloyl-D-alanyl-D-alanine + UDP + H(+). It participates in cell wall biogenesis; peptidoglycan biosynthesis. Functionally, cell wall formation. Catalyzes the transfer of a GlcNAc subunit on undecaprenyl-pyrophosphoryl-MurNAc-pentapeptide (lipid intermediate I) to form undecaprenyl-pyrophosphoryl-MurNAc-(pentapeptide)GlcNAc (lipid intermediate II). This is UDP-N-acetylglucosamine--N-acetylmuramyl-(pentapeptide) pyrophosphoryl-undecaprenol N-acetylglucosamine transferase from Alcanivorax borkumensis (strain ATCC 700651 / DSM 11573 / NCIMB 13689 / SK2).